The chain runs to 199 residues: Probable nicotinate-nucleotide adenylyltransferase (199 aa).

This sequence belongs to the NadD family.

The enzyme catalyses nicotinate beta-D-ribonucleotide + ATP + H(+) = deamido-NAD(+) + diphosphate. The protein operates within cofactor biosynthesis; NAD(+) biosynthesis; deamido-NAD(+) from nicotinate D-ribonucleotide: step 1/1. Its function is as follows. Catalyzes the reversible adenylation of nicotinate mononucleotide (NaMN) to nicotinic acid adenine dinucleotide (NaAD). This Chloroherpeton thalassium (strain ATCC 35110 / GB-78) protein is Probable nicotinate-nucleotide adenylyltransferase.